Consider the following 89-residue polypeptide: Small ribosomal subunit protein uS15 (89 aa).

This sequence belongs to the universal ribosomal protein uS15 family. Part of the 30S ribosomal subunit. Forms a bridge to the 50S subunit in the 70S ribosome, contacting the 23S rRNA.

Its function is as follows. One of the primary rRNA binding proteins, it binds directly to 16S rRNA where it helps nucleate assembly of the platform of the 30S subunit by binding and bridging several RNA helices of the 16S rRNA. In terms of biological role, forms an intersubunit bridge (bridge B4) with the 23S rRNA of the 50S subunit in the ribosome. The sequence is that of Small ribosomal subunit protein uS15 from Shewanella baltica (strain OS185).